We begin with the raw amino-acid sequence, 221 residues long: uncharacterized protein (221 aa).

The signal sequence occupies residues methionine 1 to serine 26.

This is an uncharacterized protein from Mycobacterium tuberculosis (strain ATCC 25618 / H37Rv).